The chain runs to 299 residues: tRNA dimethylallyltransferase (299 aa).

Gly-11–Thr-18 provides a ligand contact to ATP. Residue Thr-13–Thr-18 participates in substrate binding. The interval Asp-36–Gln-39 is interaction with substrate tRNA.

This sequence belongs to the IPP transferase family. As to quaternary structure, monomer. Mg(2+) serves as cofactor.

The enzyme catalyses adenosine(37) in tRNA + dimethylallyl diphosphate = N(6)-dimethylallyladenosine(37) in tRNA + diphosphate. In terms of biological role, catalyzes the transfer of a dimethylallyl group onto the adenine at position 37 in tRNAs that read codons beginning with uridine, leading to the formation of N6-(dimethylallyl)adenosine (i(6)A). The protein is tRNA dimethylallyltransferase of Streptococcus pyogenes serotype M49 (strain NZ131).